The following is a 309-amino-acid chain: Aspartate carbamoyltransferase catalytic subunit (309 aa).

Carbamoyl phosphate contacts are provided by arginine 54 and threonine 55. Lysine 82 is a binding site for L-aspartate. Carbamoyl phosphate-binding residues include arginine 104, histidine 132, and glutamine 135. Arginine 165 and arginine 219 together coordinate L-aspartate. Carbamoyl phosphate-binding residues include glycine 260 and proline 261.

This sequence belongs to the aspartate/ornithine carbamoyltransferase superfamily. ATCase family. In terms of assembly, heterododecamer (2C3:3R2) of six catalytic PyrB chains organized as two trimers (C3), and six regulatory PyrI chains organized as three dimers (R2).

The catalysed reaction is carbamoyl phosphate + L-aspartate = N-carbamoyl-L-aspartate + phosphate + H(+). It participates in pyrimidine metabolism; UMP biosynthesis via de novo pathway; (S)-dihydroorotate from bicarbonate: step 2/3. Catalyzes the condensation of carbamoyl phosphate and aspartate to form carbamoyl aspartate and inorganic phosphate, the committed step in the de novo pyrimidine nucleotide biosynthesis pathway. This Parafrankia sp. (strain EAN1pec) protein is Aspartate carbamoyltransferase catalytic subunit.